The primary structure comprises 75 residues: Translational regulator CsrA (75 aa).

It belongs to the CsrA/RsmA family. Homodimer; the beta-strands of each monomer intercalate to form a hydrophobic core, while the alpha-helices form wings that extend away from the core.

The protein localises to the cytoplasm. Its function is as follows. A translational regulator that binds mRNA to regulate translation initiation and/or mRNA stability. Usually binds in the 5'-UTR at or near the Shine-Dalgarno sequence preventing ribosome-binding, thus repressing translation. Its main target seems to be the major flagellin gene, while its function is anatagonized by FliW. This Exiguobacterium sibiricum (strain DSM 17290 / CCUG 55495 / CIP 109462 / JCM 13490 / 255-15) protein is Translational regulator CsrA.